Here is a 140-residue protein sequence, read N- to C-terminus: Oleosin Cor a 13 (140 aa).

2 consecutive transmembrane segments (helical) span residues 31–51 (GSLL…LTLA) and 75–95 (GFLA…WIYR).

It belongs to the oleosin family. In terms of tissue distribution, expressed in seeds.

Its subcellular location is the lipid droplet. The protein resides in the membrane. Functionally, may have a structural role to stabilize the lipid body during desiccation of the seed by preventing coalescence of the oil. Probably interacts with both lipid and phospholipid moieties of lipid bodies. May also provide recognition signals for specific lipase anchorage in lipolysis during seedling growth. This is Oleosin Cor a 13 from Corylus avellana (European hazel).